A 212-amino-acid chain; its full sequence is Ribonuclease HII (212 aa).

One can recognise an RNase H type-2 domain in the interval 17–206 (RVIAGVDEAG…KSTKPQSLQT (190 aa)). A divalent metal cation-binding residues include D23, E24, and D115.

Belongs to the RNase HII family. Mn(2+) is required as a cofactor. Requires Mg(2+) as cofactor.

The protein localises to the cytoplasm. It catalyses the reaction Endonucleolytic cleavage to 5'-phosphomonoester.. Its function is as follows. Endonuclease that specifically degrades the RNA of RNA-DNA hybrids. The polypeptide is Ribonuclease HII (Syntrophus aciditrophicus (strain SB)).